Consider the following 153-residue polypeptide: Cytochrome c-type biogenesis protein CcmE (153 aa).

Residues 1 to 8 (MATRRGRR) are Cytoplasmic-facing. A helical; Signal-anchor for type II membrane protein transmembrane segment spans residues 9 to 29 (ALLIAGGVGLLALAAALVLNA). Over 30–153 (LRSNLVFFFS…PSATLQTEAR (124 aa)) the chain is Periplasmic. His124 and Tyr128 together coordinate heme.

The protein belongs to the CcmE/CycJ family.

It localises to the cell inner membrane. In terms of biological role, heme chaperone required for the biogenesis of c-type cytochromes. Transiently binds heme delivered by CcmC and transfers the heme to apo-cytochromes in a process facilitated by CcmF and CcmH. The polypeptide is Cytochrome c-type biogenesis protein CcmE (Bordetella bronchiseptica (strain ATCC BAA-588 / NCTC 13252 / RB50) (Alcaligenes bronchisepticus)).